The following is a 1046-amino-acid chain: Translation initiation factor IF-2 (1046 aa).

The disordered stretch occupies residues 49 to 448; sequence EAFPAEGSAP…MGAMVPRGNG (400 aa). Positions 52 to 71 are enriched in low complexity; the sequence is PAEGSAPSSRPGGRPGNGAR. Positions 94–111 are enriched in pro residues; that stretch reads RPGPGGRPVPGRPGPAPL. Low complexity-rich tracts occupy residues 112 to 139 and 147 to 159; these read PGASRPSTPTAAPQSQPAQTQPPQSQPV and PRPAAAAASAAAP. Pro residues predominate over residues 160–176; sequence APAPSAPAPAPSAPAPA. Residues 177 to 187 are compositionally biased toward low complexity; that stretch reads PITSAPTAATP. Residues 188–206 show a composition bias toward pro residues; the sequence is PAAPQRPTPGGPRPGPAAP. The segment covering 210-222 has biased composition (gly residues); it reads RTGGPGGPGGPGG. The span at 223–235 shows a compositional bias: pro residues; sequence GPRPGPRPGPRPA. The segment covering 244 to 253 has biased composition (low complexity); sequence SPAAGPRAAS. 2 stretches are compositionally biased toward pro residues: residues 260–281 and 304–314; these read SAPPRPGAPRPGGPRPGGPRPG and RPTPGQMPPRP. Residues 320–333 are compositionally biased toward low complexity; sequence PRPNSNMFQPRPAG. Over residues 334–414 the composition is skewed to gly residues; that stretch reads GAPGRPGGGG…AGAFGPGGRG (81 aa). Positions 415-426 are enriched in basic residues; it reads RPGRQRKSKRAK. Residues 539–711 enclose the tr-type G domain; the sequence is ARPPVVTVMG…VILTADASLD (173 aa). The tract at residues 548 to 555 is G1; that stretch reads GHVDHGKT. Position 548 to 555 (548 to 555) interacts with GTP; that stretch reads GHVDHGKT. The tract at residues 573–577 is G2; it reads GITQH. The interval 598–601 is G3; sequence DTPG. GTP contacts are provided by residues 598 to 602 and 652 to 655; these read DTPGH and NKVD. The segment at 652–655 is G4; the sequence is NKVD. Residues 688-690 form a G5 region; sequence SAR.

Belongs to the TRAFAC class translation factor GTPase superfamily. Classic translation factor GTPase family. IF-2 subfamily.

It localises to the cytoplasm. Functionally, one of the essential components for the initiation of protein synthesis. Protects formylmethionyl-tRNA from spontaneous hydrolysis and promotes its binding to the 30S ribosomal subunits. Also involved in the hydrolysis of GTP during the formation of the 70S ribosomal complex. The sequence is that of Translation initiation factor IF-2 from Parafrankia sp. (strain EAN1pec).